A 428-amino-acid chain; its full sequence is Enolase (428 aa).

Gln163 contributes to the (2R)-2-phosphoglycerate binding site. The active-site Proton donor is Glu205. Residues Asp242, Glu285, and Asp312 each contribute to the Mg(2+) site. Positions 337, 366, 367, and 388 each coordinate (2R)-2-phosphoglycerate. The Proton acceptor role is filled by Lys337.

It belongs to the enolase family. Mg(2+) serves as cofactor.

The protein localises to the cytoplasm. Its subcellular location is the secreted. It is found in the cell surface. The enzyme catalyses (2R)-2-phosphoglycerate = phosphoenolpyruvate + H2O. It functions in the pathway carbohydrate degradation; glycolysis; pyruvate from D-glyceraldehyde 3-phosphate: step 4/5. In terms of biological role, catalyzes the reversible conversion of 2-phosphoglycerate (2-PG) into phosphoenolpyruvate (PEP). It is essential for the degradation of carbohydrates via glycolysis. The chain is Enolase from Neisseria meningitidis serogroup B (strain ATCC BAA-335 / MC58).